We begin with the raw amino-acid sequence, 561 residues long: Arginine--tRNA ligase (561 aa).

The short motif at 129-139 is the 'HIGH' region element; the sequence is ANPTGPLHVGH.

Belongs to the class-I aminoacyl-tRNA synthetase family. In terms of assembly, monomer.

The protein localises to the cytoplasm. It catalyses the reaction tRNA(Arg) + L-arginine + ATP = L-arginyl-tRNA(Arg) + AMP + diphosphate. In Bordetella petrii (strain ATCC BAA-461 / DSM 12804 / CCUG 43448), this protein is Arginine--tRNA ligase.